Reading from the N-terminus, the 439-residue chain is 26S proteasome regulatory subunit 6A (439 aa).

At Met1 the chain carries N-acetylmethionine. Ser9 bears the Phosphoserine mark. ATP is bound at residue 227–234 (GPPGTGKT). Ser376 carries the phosphoserine modification.

The protein belongs to the AAA ATPase family. Component of the 19S proteasome regulatory particle complex. The 26S proteasome consists of a 20S core particle (CP) and two 19S regulatory subunits (RP). The regulatory particle is made of a lid composed of 9 subunits, a base containing 6 ATPases including PSMC3 and few additional components. Interacts with PAAF1. As to quaternary structure, (Microbial infection) Interacts with HIV-1 Tat. Post-translationally, sumoylated by UBE2I in response to MEKK1-mediated stimuli.

It is found in the cytoplasm. The protein resides in the nucleus. Component of the 26S proteasome, a multiprotein complex involved in the ATP-dependent degradation of ubiquitinated proteins. This complex plays a key role in the maintenance of protein homeostasis by removing misfolded or damaged proteins, which could impair cellular functions, and by removing proteins whose functions are no longer required. Therefore, the proteasome participates in numerous cellular processes, including cell cycle progression, apoptosis, or DNA damage repair. PSMC3 belongs to the heterohexameric ring of AAA (ATPases associated with diverse cellular activities) proteins that unfolds ubiquitinated target proteins that are concurrently translocated into a proteolytic chamber and degraded into peptides. The protein is 26S proteasome regulatory subunit 6A (PSMC3) of Homo sapiens (Human).